Consider the following 420-residue polypeptide: Putative phosphate permease HI_1604 (420 aa).

Helical transmembrane passes span glycine 8–alanine 28, alanine 49–threonine 69, isoleucine 88–threonine 108, tryptophan 112–isoleucine 132, isoleucine 145–alanine 165, glycine 185–leucine 205, glutamate 216–phenylalanine 236, phenylalanine 250–phenylalanine 270, glycine 300–isoleucine 320, phenylalanine 343–isoleucine 363, valine 370–isoleucine 390, and isoleucine 393–tyrosine 413.

This sequence belongs to the inorganic phosphate transporter (PiT) (TC 2.A.20) family.

Its subcellular location is the cell inner membrane. Its function is as follows. Potential transporter for phosphate. The protein is Putative phosphate permease HI_1604 of Haemophilus influenzae (strain ATCC 51907 / DSM 11121 / KW20 / Rd).